The primary structure comprises 292 residues: 1,4-dihydroxy-2-naphthoate octaprenyltransferase (292 aa).

Helical transmembrane passes span 35–55, 101–121, 137–157, 166–186, 220–240, and 271–291; these read AAVW…VIGV, ALAG…VGAI, GYAG…AVLG, VDWV…SVLV, LLAV…WCVV, and TGLA…FGQL.

It belongs to the MenA family. Type 1 subfamily. Mg(2+) is required as a cofactor.

The protein localises to the cell membrane. The enzyme catalyses an all-trans-polyprenyl diphosphate + 1,4-dihydroxy-2-naphthoate + H(+) = a 2-demethylmenaquinol + CO2 + diphosphate. It functions in the pathway quinol/quinone metabolism; menaquinone biosynthesis; menaquinol from 1,4-dihydroxy-2-naphthoate: step 1/2. With respect to regulation, activity is abolished by EDTA. Inhibited by Ro 48-8071, which is non-competitive with regard to DHNA and competitive with regard to the isoprenyldiphosphate substrate. Functionally, conversion of 1,4-dihydroxy-2-naphthoate (DHNA) to demethylmenaquinone (DMK). Can use a variety of allylic isoprenyl diphosphates as substrates but has a requirement for at least three isoprene units. In Mycobacterium tuberculosis (strain ATCC 25618 / H37Rv), this protein is 1,4-dihydroxy-2-naphthoate octaprenyltransferase.